The following is a 135-amino-acid chain: Large-conductance mechanosensitive channel (135 aa).

The next 2 helical transmembrane spans lie at 10 to 30 (FAMRGNVIDMAVGVVIGGAFG) and 76 to 96 (GSFIQTMVDFLIIAFCIFCVI).

Belongs to the MscL family. In terms of assembly, homopentamer.

The protein localises to the cell inner membrane. Its function is as follows. Channel that opens in response to stretch forces in the membrane lipid bilayer. May participate in the regulation of osmotic pressure changes within the cell. The sequence is that of Large-conductance mechanosensitive channel from Campylobacter concisus (strain 13826).